A 556-amino-acid polypeptide reads, in one-letter code: 2-succinyl-5-enolpyruvyl-6-hydroxy-3-cyclohexene-1-carboxylate synthase (556 aa).

It belongs to the TPP enzyme family. MenD subfamily. As to quaternary structure, homodimer. The cofactor is Mg(2+). Requires Mn(2+) as cofactor. Thiamine diphosphate serves as cofactor.

The enzyme catalyses isochorismate + 2-oxoglutarate + H(+) = 5-enolpyruvoyl-6-hydroxy-2-succinyl-cyclohex-3-ene-1-carboxylate + CO2. Its pathway is quinol/quinone metabolism; 1,4-dihydroxy-2-naphthoate biosynthesis; 1,4-dihydroxy-2-naphthoate from chorismate: step 2/7. It participates in quinol/quinone metabolism; menaquinone biosynthesis. Its function is as follows. Catalyzes the thiamine diphosphate-dependent decarboxylation of 2-oxoglutarate and the subsequent addition of the resulting succinic semialdehyde-thiamine pyrophosphate anion to isochorismate to yield 2-succinyl-5-enolpyruvyl-6-hydroxy-3-cyclohexene-1-carboxylate (SEPHCHC). In Escherichia coli O157:H7, this protein is 2-succinyl-5-enolpyruvyl-6-hydroxy-3-cyclohexene-1-carboxylate synthase.